Here is a 413-residue protein sequence, read N- to C-terminus: Probable isoleucine--tRNA ligase, mitochondrial (413 aa).

The short motif at 298–302 (KMSKS) is the 'KMSKS' region element. Residue lysine 301 participates in ATP binding.

This sequence belongs to the class-I aminoacyl-tRNA synthetase family.

The protein localises to the mitochondrion matrix. The catalysed reaction is tRNA(Ile) + L-isoleucine + ATP = L-isoleucyl-tRNA(Ile) + AMP + diphosphate. The sequence is that of Probable isoleucine--tRNA ligase, mitochondrial from Ciona intestinalis (Transparent sea squirt).